The sequence spans 3225 residues: Intermembrane lipid transfer protein VPS13 (3225 aa).

The involved in phospholipid binding stretch occupies residues 1 to 1390 (MLEGLVAGLL…VFAADVEQHT (1390 aa)). The Chorein N-terminal domain maps to 2-115 (LEGLVAGLLN…RHRLKMEKLD (114 aa)). Disordered regions lie at residues 1568-1610 (PEAP…QQLV) and 1768-1799 (AGLK…SHSG). The span at 1590-1610 (VRVGSSGRHSESSAGSGQQLV) shows a compositional bias: low complexity. Residues 1777 to 1799 (GKGTSTLATRTRHASQSAASHSG) are compositionally biased toward polar residues. Residues 2290 to 2570 (FKVTVYSPYV…PYAWDFPAAK (281 aa)) enclose the SHR-BD domain.

This sequence belongs to the VPS13 family.

The protein localises to the membrane. Mediates the transfer of lipids between membranes at organelle contact sites. Binds phospholipids, including phosphatidylcholine (PC), phosphatidylethanolamine (PE), phosphatidic acid (PA), and phosphatidylserine (PS). May play a role in mitochondrial lipid homeostasis, Golgi vesicle transport, reticulophagy, actin cytoskeleton organization and formation of the prospore membrane. The sequence is that of Intermembrane lipid transfer protein VPS13 from Chaetomium thermophilum (strain DSM 1495 / CBS 144.50 / IMI 039719) (Thermochaetoides thermophila).